Reading from the N-terminus, the 556-residue chain is Phosphoenolpyruvate-protein phosphotransferase (556 aa).

Catalysis depends on histidine 186, which acts as the Tele-phosphohistidine intermediate. Residues arginine 288 and arginine 325 each coordinate phosphoenolpyruvate. Positions 415 and 439 each coordinate Mg(2+). Residues 438-439 (ND) and arginine 449 contribute to the phosphoenolpyruvate site. Cysteine 486 (proton donor) is an active-site residue.

Belongs to the PEP-utilizing enzyme family. In terms of assembly, homodimer. The cofactor is Mg(2+).

Its subcellular location is the cytoplasm. The catalysed reaction is L-histidyl-[protein] + phosphoenolpyruvate = N(pros)-phospho-L-histidyl-[protein] + pyruvate. General (non sugar-specific) component of the phosphoenolpyruvate-dependent sugar phosphotransferase system (sugar PTS). This major carbohydrate active-transport system catalyzes the phosphorylation of incoming sugar substrates concomitantly with their translocation across the cell membrane. Enzyme I transfers the phosphoryl group from phosphoenolpyruvate (PEP) to the phosphoryl carrier protein (HPr). This Streptomyces coelicolor (strain ATCC BAA-471 / A3(2) / M145) protein is Phosphoenolpyruvate-protein phosphotransferase (ptsI).